The following is a 139-amino-acid chain: Small ribosomal subunit protein uS9 (139 aa).

It belongs to the universal ribosomal protein uS9 family.

The sequence is that of Small ribosomal subunit protein uS9 from Coxiella burnetii (strain CbuK_Q154) (Coxiella burnetii (strain Q154)).